The primary structure comprises 196 residues: Pyridoxal 5'-phosphate synthase subunit PdxT (196 aa).

47-49 provides a ligand contact to L-glutamine; the sequence is GES. Catalysis depends on cysteine 79, which acts as the Nucleophile. L-glutamine contacts are provided by residues arginine 106 and 134-135; that span reads IR. Catalysis depends on charge relay system residues histidine 170 and glutamate 172.

The protein belongs to the glutaminase PdxT/SNO family. In the presence of PdxS, forms a dodecamer of heterodimers. Only shows activity in the heterodimer.

It catalyses the reaction aldehydo-D-ribose 5-phosphate + D-glyceraldehyde 3-phosphate + L-glutamine = pyridoxal 5'-phosphate + L-glutamate + phosphate + 3 H2O + H(+). The catalysed reaction is L-glutamine + H2O = L-glutamate + NH4(+). Its pathway is cofactor biosynthesis; pyridoxal 5'-phosphate biosynthesis. In terms of biological role, catalyzes the hydrolysis of glutamine to glutamate and ammonia as part of the biosynthesis of pyridoxal 5'-phosphate. The resulting ammonia molecule is channeled to the active site of PdxS. This Bacillus cereus (strain G9842) protein is Pyridoxal 5'-phosphate synthase subunit PdxT.